Reading from the N-terminus, the 223-residue chain is Histone H1.5 (223 aa).

The span at 1–14 shows a compositional bias: low complexity; the sequence is MSETAPAETAAPAP. The disordered stretch occupies residues 1 to 56; sequence MSETAPAETAAPAPVEKSPAKKKTTKKAGAAKRKATGPPVSELITKAVSASKERGG. N-acetylserine is present on serine 2. Position 2 is a phosphoserine (serine 2). Lysine 17 carries the post-translational modification N6-acetyllysine. Residue serine 18 is modified to Phosphoserine. Over residues 20 to 35 the composition is skewed to basic residues; the sequence is AKKKTTKKAGAAKRKA. Lysine 27 is modified (N6-methyllysine). At lysine 34 the chain carries N6-(beta-hydroxybutyryl)lysine; alternate. At lysine 34 the chain carries N6-succinyllysine; alternate. At threonine 36 the chain carries Phosphothreonine. The H15 domain occupies 36 to 109; it reads TGPPVSELIT…GASGSFKLNK (74 aa). Lysine 46 carries the post-translational modification N6-acetyllysine. Residue lysine 52 is modified to N6-(beta-hydroxybutyryl)lysine. The residue at position 54 (arginine 54) is a Citrulline. The residue at position 64 (lysine 64) is an N6-(beta-hydroxybutyryl)lysine. Residue lysine 75 is modified to N6-acetyllysine. Lysine 85, lysine 90, and lysine 106 each carry N6-(beta-hydroxybutyryl)lysine. Residues 91–223 are disordered; that stretch reads GTLVQTKGTG…KAKKAVSKKK (133 aa). The span at 119 to 130 shows a compositional bias: basic residues; sequence KAKKTGAAKAKK. Residues threonine 135 and threonine 152 each carry the phosphothreonine modification. The segment covering 137–158 has biased composition (basic residues); sequence KKPKKTAGAKKTVKKTPKKAKK. N6-acetyllysine is present on lysine 165. Residues 166 to 184 are compositionally biased toward basic residues; sequence KVAKSPKKAKAAAKPKKAA. Serine 170 and serine 186 each carry phosphoserine. Basic residues predominate over residues 191-223; the sequence is KAVKSKASKPKVTKPKTAKPKAAKAKKAVSKKK.

The protein belongs to the histone H1/H5 family. Interacts with MSX1. In terms of processing, H1 histones are progressively phosphorylated during the cell cycle, becoming maximally phosphorylated during late G2 phase and M phase, and being dephosphorylated sharply thereafter. Citrullination at Arg-54 (H1R54ci) by PADI4 takes place within the DNA-binding site of H1 and results in its displacement from chromatin and global chromatin decondensation, thereby promoting pluripotency and stem cell maintenance. Post-translationally, hydroxybutyrylation of histones is induced by starvation.

It localises to the nucleus. The protein resides in the chromosome. Histone H1 protein binds to linker DNA between nucleosomes forming the macromolecular structure known as the chromatin fiber. Histones H1 are necessary for the condensation of nucleosome chains into higher-order structured fibers. Also acts as a regulator of individual gene transcription through chromatin remodeling, nucleosome spacing and DNA methylation. The chain is Histone H1.5 (H1-5) from Mus musculus (Mouse).